Here is a 233-residue protein sequence, read N- to C-terminus: N-(5'-phosphoribosyl)anthranilate isomerase (233 aa).

This sequence belongs to the TrpF family.

It catalyses the reaction N-(5-phospho-beta-D-ribosyl)anthranilate = 1-(2-carboxyphenylamino)-1-deoxy-D-ribulose 5-phosphate. Its pathway is amino-acid biosynthesis; L-tryptophan biosynthesis; L-tryptophan from chorismate: step 3/5. This is N-(5'-phosphoribosyl)anthranilate isomerase from Ralstonia pickettii (strain 12J).